A 319-amino-acid chain; its full sequence is Ankyrin repeat domain-containing protein 1 (319 aa).

A disordered region spans residues 46–65; sequence KTLPANSVKQGEEQRKSEKL. Positions 53–89 form a coiled coil; sequence VKQGEEQRKSEKLREAELKKKKLEQRSKLENLEDLEI. Basic and acidic residues predominate over residues 55-65; that stretch reads QGEEQRKSEKL. ANK repeat units lie at residues 152 to 181, 185 to 214, 218 to 247, 251 to 280, and 284 to 315; these read YKRT…QIEF, LEST…KISA, LLST…DLNA, EGDT…DLKV, and AGKT…KNSR.

In terms of assembly, interacts with TTN/titin and YBX1. As to expression, expressed in heart, cardiac muscle.

The protein localises to the nucleus. In terms of biological role, may play an important role in endothelial cell activation. May act as a nuclear transcription factor that negatively regulates the expression of cardiac genes. This chain is Ankyrin repeat domain-containing protein 1 (Ankrd1), found in Mus musculus (Mouse).